A 284-amino-acid polypeptide reads, in one-letter code: Bifunctional protein FolD (284 aa).

NADP(+) contacts are provided by residues 165 to 167 (GAS), Ser190, and Ile231.

Belongs to the tetrahydrofolate dehydrogenase/cyclohydrolase family. In terms of assembly, homodimer.

It catalyses the reaction (6R)-5,10-methylene-5,6,7,8-tetrahydrofolate + NADP(+) = (6R)-5,10-methenyltetrahydrofolate + NADPH. It carries out the reaction (6R)-5,10-methenyltetrahydrofolate + H2O = (6R)-10-formyltetrahydrofolate + H(+). Its pathway is one-carbon metabolism; tetrahydrofolate interconversion. Its function is as follows. Catalyzes the oxidation of 5,10-methylenetetrahydrofolate to 5,10-methenyltetrahydrofolate and then the hydrolysis of 5,10-methenyltetrahydrofolate to 10-formyltetrahydrofolate. The chain is Bifunctional protein FolD from Bordetella avium (strain 197N).